Consider the following 207-residue polypeptide: Transcriptional regulator GfcR (207 aa).

This sequence belongs to the purine/pyrimidine phosphoribosyltransferase family. GfcR subfamily.

In Methanocella arvoryzae (strain DSM 22066 / NBRC 105507 / MRE50), this protein is Transcriptional regulator GfcR.